We begin with the raw amino-acid sequence, 144 residues long: MLDAQQIKEIIPHRYPFLLVDRVTEVEEGKRAAGYKNVTVNEEFFNGHFPDYPVMPGVLIVEALAQVGAVALLMKEENRGRLAFFAGIDSCRFKKQVKPGDQLHLELEVLRFRGSIGKGKGVAKVDGEVVCEAELMFSLGEKQE.

His-48 is an active-site residue.

It belongs to the thioester dehydratase family. FabZ subfamily.

It is found in the cytoplasm. The enzyme catalyses a (3R)-hydroxyacyl-[ACP] = a (2E)-enoyl-[ACP] + H2O. Involved in unsaturated fatty acids biosynthesis. Catalyzes the dehydration of short chain beta-hydroxyacyl-ACPs and long chain saturated and unsaturated beta-hydroxyacyl-ACPs. The protein is 3-hydroxyacyl-[acyl-carrier-protein] dehydratase FabZ of Bacillus licheniformis (strain ATCC 14580 / DSM 13 / JCM 2505 / CCUG 7422 / NBRC 12200 / NCIMB 9375 / NCTC 10341 / NRRL NRS-1264 / Gibson 46).